The sequence spans 426 residues: ORC1-type DNA replication protein 1 (426 aa).

ATP contacts are provided by residues 62–66 (VGKTL), Tyr-211, and Arg-223.

The protein belongs to the CDC6/cdc18 family.

Involved in regulation of DNA replication. The protein is ORC1-type DNA replication protein 1 (cdc6a) of Haloarcula marismortui (strain ATCC 43049 / DSM 3752 / JCM 8966 / VKM B-1809) (Halobacterium marismortui).